A 73-amino-acid polypeptide reads, in one-letter code: U3-agatoxin-Ao1j (73 aa).

Residues 1–20 (MRTIISLLLLSAMVFAVIEA) form the signal peptide. Positions 21–34 (ISLEEGLQLFEGER) are excised as a propeptide. Intrachain disulfides connect Cys-36–Cys-52, Cys-43–Cys-57, Cys-51–Cys-67, and Cys-59–Cys-65. A Serine amide modification is found at Ser-71.

Belongs to the neurotoxin 07 (Beta/delta-agtx) family. 03 (aga-4) subfamily. Aga sub-subfamily. Expressed by the venom gland.

The protein resides in the secreted. In terms of biological role, insecticidal neurotoxin that induces an irreversible spastic paralysis when injected into insects. Modifies presynaptic voltage-gated sodium channels (Nav), causing them to open at the normal resting potential of the nerve. This leads to spontaneous release of neurotransmitter and repetitive action potentials in motor neurons. The polypeptide is U3-agatoxin-Ao1j (Agelena orientalis (Funnel-web spider)).